Here is a 317-residue protein sequence, read N- to C-terminus: Ribosomal RNA small subunit methyltransferase H (317 aa).

S-adenosyl-L-methionine contacts are provided by residues 39-41 (GGH), D59, F83, D104, and Q111.

This sequence belongs to the methyltransferase superfamily. RsmH family.

Its subcellular location is the cytoplasm. The catalysed reaction is cytidine(1402) in 16S rRNA + S-adenosyl-L-methionine = N(4)-methylcytidine(1402) in 16S rRNA + S-adenosyl-L-homocysteine + H(+). In terms of biological role, specifically methylates the N4 position of cytidine in position 1402 (C1402) of 16S rRNA. This chain is Ribosomal RNA small subunit methyltransferase H, found in Paraburkholderia xenovorans (strain LB400).